The chain runs to 386 residues: F420 non-reducing hydrogenase I small subunit (386 aa).

A signal peptide (tat-type signal) is located at residues 1 to 51 (MVEMSTGTTNLVRTLDSMDFLKMDRRTFMKAVSALGATAFLGTYQTEIVNA). Residues C67, C70, C178, C227, H273, C276, C296, and C302 each coordinate [4Fe-4S] cluster. Residues C311, C330, and C333 each coordinate [3Fe-4S] cluster.

The protein belongs to the [NiFe]/[NiFeSe] hydrogenase small subunit family. In terms of assembly, composed of a large subunit (VhoA), a small subunit (VhoG) and a cytochrome subunit (VhoC). Requires [4Fe-4S] cluster as cofactor. It depends on [3Fe-4S] cluster as a cofactor. Post-translationally, predicted to be exported by the Tat system. The position of the signal peptide cleavage has not been experimentally proven.

The protein resides in the cell membrane. The enzyme catalyses methanophenazine + H2 = dihydromethanophenazine. Functionally, part of the F420 non-reducing hydrogenase I complex that catalyzes the reduction of methanophenazine to dihydromethanophenazine. This chain is F420 non-reducing hydrogenase I small subunit, found in Methanosarcina mazei (strain ATCC BAA-159 / DSM 3647 / Goe1 / Go1 / JCM 11833 / OCM 88) (Methanosarcina frisia).